The following is a 317-amino-acid chain: Transaldolase (317 aa).

The active-site Schiff-base intermediate with substrate is Lys126.

It belongs to the transaldolase family. Type 1 subfamily. In terms of assembly, homodimer.

It localises to the cytoplasm. The catalysed reaction is D-sedoheptulose 7-phosphate + D-glyceraldehyde 3-phosphate = D-erythrose 4-phosphate + beta-D-fructose 6-phosphate. Its pathway is carbohydrate degradation; pentose phosphate pathway; D-glyceraldehyde 3-phosphate and beta-D-fructose 6-phosphate from D-ribose 5-phosphate and D-xylulose 5-phosphate (non-oxidative stage): step 2/3. Functionally, transaldolase is important for the balance of metabolites in the pentose-phosphate pathway. This is Transaldolase from Burkholderia orbicola (strain MC0-3).